The primary structure comprises 114 residues: Small ribosomal subunit protein uS17 (114 aa).

This sequence belongs to the universal ribosomal protein uS17 family. Part of the 30S ribosomal subunit.

In terms of biological role, one of the primary rRNA binding proteins, it binds specifically to the 5'-end of 16S ribosomal RNA. This chain is Small ribosomal subunit protein uS17, found in Aeropyrum pernix (strain ATCC 700893 / DSM 11879 / JCM 9820 / NBRC 100138 / K1).